The following is a 295-amino-acid chain: MNIQDMILTLQKHWSSQGCVLMQAYDVEKGAGTMSPYTFLRSIGPEPWKVAYVEPSRRPADGRYGENPNRLYQHHQFQVIIKPSPDNIQELYLDSLRALGIDPLEHDIRFVEDNWENPSLGCAGLGWEVWLDGMEITQFTYFQQVGGLECKPVSVEITYGIERLASYIQDKENVFDLEWTSGFTVKDLFMMAEYEHSVYTFETSDVDMLFQLFSTYEKEAIKQMDNGLVHPAYDYVLKCSHTFNLLDAKGAISVTERTGYIARVRNLARKVAKTYYEEREKLGFPMLKGEGSSHE.

It belongs to the class-II aminoacyl-tRNA synthetase family. Tetramer of two alpha and two beta subunits.

It is found in the cytoplasm. It catalyses the reaction tRNA(Gly) + glycine + ATP = glycyl-tRNA(Gly) + AMP + diphosphate. This chain is Glycine--tRNA ligase alpha subunit (glyQ), found in Bacillus subtilis (strain 168).